Here is a 149-residue protein sequence, read N- to C-terminus: UPF0260 protein RCAP_rcc02083 (149 aa).

Belongs to the UPF0260 family.

The sequence is that of UPF0260 protein RCAP_rcc02083 from Rhodobacter capsulatus (strain ATCC BAA-309 / NBRC 16581 / SB1003).